We begin with the raw amino-acid sequence, 163 residues long: Nucleotide-binding protein NTHI1194 (163 aa).

This sequence belongs to the YajQ family.

Nucleotide-binding protein. In Haemophilus influenzae (strain 86-028NP), this protein is Nucleotide-binding protein NTHI1194.